A 282-amino-acid chain; its full sequence is MDTRKNVSGAERKIWSLIRDCSGKLEGVTETSVLEVLLIVSRVLGIRKEDLFLKDLGVSPTEEKRILELVEKRASGYPLHYILGEKEFMGLSFLVEEGVFVPRPETEELVELALELIRKYGIKTVADIGTGSGAIGVSVAKFSDAIVFATDVSSKAVEIARKNAERHGVSDRFFVRKGEFLEPFKEKFASIEMILSNPPYVKSSAHLPKDVLFEPPEALFGGEDGLDFYREFFGRYDTSGKIVLMEIGEDQVEELKKIVSDTVFLKDSAGKYRFLLLNRRSS.

S-adenosyl-L-methionine contacts are provided by residues 129-133, aspartate 151, phenylalanine 180, and asparagine 197; that span reads GTGSG. 197–200 is a binding site for substrate; the sequence is NPPY.

Belongs to the protein N5-glutamine methyltransferase family. PrmC subfamily. Monomer and homodimer.

The catalysed reaction is L-glutaminyl-[peptide chain release factor] + S-adenosyl-L-methionine = N(5)-methyl-L-glutaminyl-[peptide chain release factor] + S-adenosyl-L-homocysteine + H(+). In terms of biological role, methylates the class 1 translation termination release factors RF1/PrfA and RF2/PrfB on the glutamine residue of the universally conserved GGQ motif. In Thermotoga maritima (strain ATCC 43589 / DSM 3109 / JCM 10099 / NBRC 100826 / MSB8), this protein is Release factor glutamine methyltransferase (prmC).